Reading from the N-terminus, the 553-residue chain is Hydroxylamine reductase (553 aa).

Residues Cys3, Cys6, Cys18, and Cys25 each contribute to the [2Fe-2S] cluster site. Hybrid [4Fe-2O-2S] cluster contacts are provided by His252, Glu276, Cys320, Cys408, Cys436, Cys461, Glu495, and Lys497. Cys408 is subject to Cysteine persulfide.

This sequence belongs to the HCP family. [2Fe-2S] cluster is required as a cofactor. The cofactor is hybrid [4Fe-2O-2S] cluster.

It is found in the cytoplasm. It carries out the reaction A + NH4(+) + H2O = hydroxylamine + AH2 + H(+). Functionally, catalyzes the reduction of hydroxylamine to form NH(3) and H(2)O. This chain is Hydroxylamine reductase, found in Photobacterium phosphoreum.